We begin with the raw amino-acid sequence, 392 residues long: L-rhamnonate dehydratase (392 aa).

Positions 22 and 48 each coordinate substrate. Mg(2+)-binding residues include D214, E240, and E268. H318 functions as the Proton acceptor in the catalytic mechanism. E338 contributes to the substrate binding site.

Belongs to the mandelate racemase/muconate lactonizing enzyme family. RhamD subfamily. In terms of assembly, homooctamer; tetramer of dimers. The cofactor is Mg(2+).

The catalysed reaction is L-rhamnonate = 2-dehydro-3-deoxy-L-rhamnonate + H2O. Catalyzes the dehydration of L-rhamnonate to 2-keto-3-deoxy-L-rhamnonate (KDR). The sequence is that of L-rhamnonate dehydratase from Burkholderia ambifaria (strain ATCC BAA-244 / DSM 16087 / CCUG 44356 / LMG 19182 / AMMD) (Burkholderia cepacia (strain AMMD)).